The sequence spans 356 residues: Arginine kinase (356 aa).

In terms of domain architecture, Phosphagen kinase N-terminal spans K9–I91. G64 to Y68 serves as a coordination point for L-arginine. The Phosphagen kinase C-terminal domain occupies F119–A356. Residues S122–R126 and H185 each bind ATP. Residue E225 participates in L-arginine binding. R229 serves as a coordination point for ATP. Residue C271 coordinates L-arginine. Residues R280–H284 and R309–E314 contribute to the ATP site. Residue E314 participates in L-arginine binding.

The protein belongs to the ATP:guanido phosphotransferase family.

The catalysed reaction is L-arginine + ATP = N(omega)-phospho-L-arginine + ADP + H(+). The polypeptide is Arginine kinase (ARGK) (Artemia franciscana (Brine shrimp)).